We begin with the raw amino-acid sequence, 308 residues long: 4-hydroxy-3-methylbut-2-enyl diphosphate reductase 2 (308 aa).

Cysteine 12 serves as a coordination point for [4Fe-4S] cluster. (2E)-4-hydroxy-3-methylbut-2-enyl diphosphate-binding residues include histidine 41 and histidine 74. The dimethylallyl diphosphate site is built by histidine 41 and histidine 74. Histidine 41 and histidine 74 together coordinate isopentenyl diphosphate. [4Fe-4S] cluster is bound at residue cysteine 96. A (2E)-4-hydroxy-3-methylbut-2-enyl diphosphate-binding site is contributed by histidine 124. Histidine 124 contributes to the dimethylallyl diphosphate binding site. Histidine 124 is an isopentenyl diphosphate binding site. Glutamate 126 functions as the Proton donor in the catalytic mechanism. Threonine 164 serves as a coordination point for (2E)-4-hydroxy-3-methylbut-2-enyl diphosphate. Cysteine 194 contributes to the [4Fe-4S] cluster binding site. Serine 222, serine 223, asparagine 224, and serine 266 together coordinate (2E)-4-hydroxy-3-methylbut-2-enyl diphosphate. Dimethylallyl diphosphate is bound by residues serine 222, serine 223, asparagine 224, and serine 266. Serine 222, serine 223, asparagine 224, and serine 266 together coordinate isopentenyl diphosphate.

Belongs to the IspH family. [4Fe-4S] cluster serves as cofactor.

It carries out the reaction isopentenyl diphosphate + 2 oxidized [2Fe-2S]-[ferredoxin] + H2O = (2E)-4-hydroxy-3-methylbut-2-enyl diphosphate + 2 reduced [2Fe-2S]-[ferredoxin] + 2 H(+). The enzyme catalyses dimethylallyl diphosphate + 2 oxidized [2Fe-2S]-[ferredoxin] + H2O = (2E)-4-hydroxy-3-methylbut-2-enyl diphosphate + 2 reduced [2Fe-2S]-[ferredoxin] + 2 H(+). Its pathway is isoprenoid biosynthesis; dimethylallyl diphosphate biosynthesis; dimethylallyl diphosphate from (2E)-4-hydroxy-3-methylbutenyl diphosphate: step 1/1. It participates in isoprenoid biosynthesis; isopentenyl diphosphate biosynthesis via DXP pathway; isopentenyl diphosphate from 1-deoxy-D-xylulose 5-phosphate: step 6/6. Functionally, catalyzes the conversion of 1-hydroxy-2-methyl-2-(E)-butenyl 4-diphosphate (HMBPP) into a mixture of isopentenyl diphosphate (IPP) and dimethylallyl diphosphate (DMAPP). Acts in the terminal step of the DOXP/MEP pathway for isoprenoid precursor biosynthesis. The chain is 4-hydroxy-3-methylbut-2-enyl diphosphate reductase 2 from Bradyrhizobium diazoefficiens (strain JCM 10833 / BCRC 13528 / IAM 13628 / NBRC 14792 / USDA 110).